A 916-amino-acid polypeptide reads, in one-letter code: Protein O-GlcNAcase (916 aa).

Residues 1–50 (MVQKESQAALEERESERNANPASVSGASLEPSAAPAPGEDNPSGAGAAAG) form a disordered region. A GH84 domain is found at 60–336 (FLCGVVEGFY…TLATWYKSNM (277 aa)). Residues G67, K98, and D174 each contribute to the a protein site. D175 functions as the Proton donor in the catalytic mechanism. A protein-binding positions include Y219, 278–280 (WDN), D285, and N313. Residue S364 is modified to Phosphoserine. Positions 440-480 (QGAALSGEPSALTKEEEKKQPDEEPMDMVVEKQEESEHKSD) are disordered. 2 stretches are compositionally biased toward basic and acidic residues: residues 452–461 (TKEEEKKQPD) and 468–480 (VVEKQEESEHKSD).

This sequence belongs to the glycosyl hydrolase 84 family. Monomer. Interacts with CLOCK. Proteolytically cleaved by caspase-3 during apoptosis. The fragments interact with each other; cleavage does not decrease enzyme activity. As to expression, detected in spleen (at protein level). Ubiquitous. Expressed at highest levels in the brain and spleen.

The protein localises to the nucleus. Its subcellular location is the cytoplasm. The enzyme catalyses 3-O-(N-acetyl-beta-D-glucosaminyl)-L-seryl-[protein] + H2O = N-acetyl-D-glucosamine + L-seryl-[protein]. It catalyses the reaction 3-O-(N-acetyl-beta-D-glucosaminyl)-L-threonyl-[protein] + H2O = L-threonyl-[protein] + N-acetyl-D-glucosamine. With respect to regulation, inhibited by Cu(2+), Hg(2+), Cd(2+) and Zn(2+) at 1 mM. Not inhibited by Co(2+), Mg(2+), Ca(2+), Mn(2+), Fe(3+) and EDTA. Also inhibited by sodium chloride at 1M and 2-amino-2-hydroxymethyl-1,3-propanediol (trishydroxymethylaminomethane) at 75 mM. Cleaves GlcNAc but not GalNAc from O-glycosylated proteins. Deglycosylates a large and diverse number of proteins, such as CRYAB, ELK1, GSDMD, LMNB1 and TAB1. Can use p-nitrophenyl-beta-GlcNAc and 4-methylumbelliferone-GlcNAc as substrates but not p-nitrophenyl-beta-GalNAc or p-nitrophenyl-alpha-GlcNAc (in vitro). Does not bind acetyl-CoA and does not have histone acetyltransferase activity. Its function is as follows. Lacks enzyme activity. In Rattus norvegicus (Rat), this protein is Protein O-GlcNAcase.